The chain runs to 466 residues: ATP synthase subunit beta (466 aa).

152–159 is an ATP binding site; it reads GGAGVGKT.

This sequence belongs to the ATPase alpha/beta chains family. In terms of assembly, F-type ATPases have 2 components, CF(1) - the catalytic core - and CF(0) - the membrane proton channel. CF(1) has five subunits: alpha(3), beta(3), gamma(1), delta(1), epsilon(1). CF(0) has three main subunits: a(1), b(2) and c(9-12). The alpha and beta chains form an alternating ring which encloses part of the gamma chain. CF(1) is attached to CF(0) by a central stalk formed by the gamma and epsilon chains, while a peripheral stalk is formed by the delta and b chains.

It localises to the cell inner membrane. The catalysed reaction is ATP + H2O + 4 H(+)(in) = ADP + phosphate + 5 H(+)(out). Produces ATP from ADP in the presence of a proton gradient across the membrane. The catalytic sites are hosted primarily by the beta subunits. In Helicobacter acinonychis (strain Sheeba), this protein is ATP synthase subunit beta.